A 348-amino-acid polypeptide reads, in one-letter code: Dihydroorotase (348 aa).

Zn(2+)-binding residues include His14 and His16. Residues 16–18 (HLR) and Asn42 each bind substrate. Positions 100, 137, and 175 each coordinate Zn(2+). The residue at position 100 (Lys100) is an N6-carboxylysine. A substrate-binding site is contributed by His137. Leu220 serves as a coordination point for substrate. Position 248 (Asp248) interacts with Zn(2+). Residue Asp248 is part of the active site. The substrate site is built by His252 and Ala264.

The protein belongs to the metallo-dependent hydrolases superfamily. DHOase family. Class II DHOase subfamily. Homodimer. Zn(2+) serves as cofactor.

It catalyses the reaction (S)-dihydroorotate + H2O = N-carbamoyl-L-aspartate + H(+). Its pathway is pyrimidine metabolism; UMP biosynthesis via de novo pathway; (S)-dihydroorotate from bicarbonate: step 3/3. Catalyzes the reversible cyclization of carbamoyl aspartate to dihydroorotate. In Pseudomonas putida (strain W619), this protein is Dihydroorotase.